A 305-amino-acid chain; its full sequence is Dihydroorotate dehydrogenase B (NAD(+)), catalytic subunit (305 aa).

FMN contacts are provided by residues serine 21 and 45-46 (KA). Residues lysine 45 and 69-73 (NAIGL) each bind substrate. FMN-binding residues include asparagine 99 and asparagine 127. A substrate-binding site is contributed by asparagine 127. The active-site Nucleophile is the cysteine 130. The FMN site is built by lysine 165 and isoleucine 190. 191-192 (NT) is a binding site for substrate. FMN contacts are provided by residues glycine 216, 242 to 243 (GG), and 264 to 265 (GT).

This sequence belongs to the dihydroorotate dehydrogenase family. Type 1 subfamily. As to quaternary structure, heterotetramer of 2 PyrK and 2 PyrD type B subunits. The cofactor is FMN.

It is found in the cytoplasm. It catalyses the reaction (S)-dihydroorotate + NAD(+) = orotate + NADH + H(+). Its pathway is pyrimidine metabolism; UMP biosynthesis via de novo pathway; orotate from (S)-dihydroorotate (NAD(+) route): step 1/1. Its function is as follows. Catalyzes the conversion of dihydroorotate to orotate with NAD(+) as electron acceptor. The chain is Dihydroorotate dehydrogenase B (NAD(+)), catalytic subunit (pyrD) from Staphylococcus carnosus (strain TM300).